We begin with the raw amino-acid sequence, 180 residues long: Adipocyte-related X-chromosome expressed sequence 1 (180 aa).

Topologically, residues M1–L11 are cytoplasmic. Residues F12–F32 form a helical; Signal-anchor for type II membrane protein membrane-spanning segment. Residues K33–F180 lie on the Lumenal side of the membrane. An N-linked (GlcNAc...) asparagine glycan is attached at N141.

This sequence belongs to the SPCS3 family. Strongly expressed in epididymal white and brown adipose tissue with low levels in heart.

The protein resides in the endoplasmic reticulum membrane. Plays a role in adipogenesis. This chain is Adipocyte-related X-chromosome expressed sequence 1, found in Mus musculus (Mouse).